The chain runs to 409 residues: F-box/kelch-repeat protein At2g44130 (409 aa).

In terms of domain architecture, F-box spans 17–63; the sequence is HELIPGLPSELALECLVRVPFQFQSAMRSVCRSWRSLLSDSSFIQER. Kelch repeat units follow at residues 98 to 148, 151 to 199, 201 to 248, and 251 to 300; these read KKSE…VLQD, KILL…SVSP, KVYV…AVGM, and RFCV…RTAG.

The chain is F-box/kelch-repeat protein At2g44130 from Arabidopsis thaliana (Mouse-ear cress).